Here is a 563-residue protein sequence, read N- to C-terminus: Eukaryotic translation initiation factor 3 subunit D-1 (563 aa).

The segment at 98–167 (VQKPPHQRGR…GPPPKMRESS (70 aa)) is disordered. Over residues 100–121 (KPPHQRGRFRNMRNSRSGRGRN) the composition is skewed to basic residues. Thr-128 carries the phosphothreonine modification. The RNA gate stretch occupies residues 291-305 (EFDLLTVNETSVEPP).

The protein belongs to the eIF-3 subunit D family. In terms of assembly, component of the eukaryotic translation initiation factor 3 (eIF-3) complex. The eIF-3 complex interacts with pix.

It is found in the cytoplasm. Its function is as follows. mRNA cap-binding component of the eukaryotic translation initiation factor 3 (eIF-3) complex, which is involved in protein synthesis of a specialized repertoire of mRNAs and, together with other initiation factors, stimulates binding of mRNA and methionyl-tRNAi to the 40S ribosome. The eIF-3 complex specifically targets and initiates translation of a subset of mRNAs involved in cell proliferation. In the eIF-3 complex, eif3d specifically recognizes and binds the 7-methylguanosine cap of a subset of mRNAs. The sequence is that of Eukaryotic translation initiation factor 3 subunit D-1 from Drosophila mojavensis (Fruit fly).